A 453-amino-acid polypeptide reads, in one-letter code: Pre-mRNA-splicing factor prp46 (453 aa).

Residues 62 to 71 are compositionally biased toward low complexity; sequence EKQAKAAAAG. The interval 62–129 is disordered; the sequence is EKQAKAAAAG…PSATRQQRPD (68 aa). WD repeat units follow at residues 142-181, 184-223, 226-265, 268-309, 311-350, 351-389, and 400-439; these read GHLG…LRLT, GHIS…VIRH, GHLS…NIHV, GHKG…GVLT, HKKG…QNFE, GHNA…KFQS, and DAEA…TPES. The disordered stretch occupies residues 432 to 453; it reads DDEATPESHPVTWAPTLGRQRY.

Belongs to the WD repeat PRL1/PRL2 family. In terms of assembly, associated with the spliceosome.

It is found in the cytoplasm. The protein resides in the nucleus. Functionally, involved in pre-mRNA splicing and required for cell cycle progression at G2/M. In Aspergillus fumigatus (strain ATCC MYA-4609 / CBS 101355 / FGSC A1100 / Af293) (Neosartorya fumigata), this protein is Pre-mRNA-splicing factor prp46 (prp46).